The primary structure comprises 118 residues: Large ribosomal subunit protein uL18 (118 aa).

This sequence belongs to the universal ribosomal protein uL18 family. Part of the 50S ribosomal subunit; part of the 5S rRNA/L5/L18/L25 subcomplex. Contacts the 5S and 23S rRNAs.

In terms of biological role, this is one of the proteins that bind and probably mediate the attachment of the 5S RNA into the large ribosomal subunit, where it forms part of the central protuberance. This Lactobacillus acidophilus (strain ATCC 700396 / NCK56 / N2 / NCFM) protein is Large ribosomal subunit protein uL18.